We begin with the raw amino-acid sequence, 432 residues long: Endosome-associated-trafficking regulator 1 (432 aa).

S18 carries the phosphoserine modification. Residues 126–143 show a composition bias toward basic and acidic residues; that stretch reads DTTTSRIYPKEASRHPLG. The segment at 126 to 145 is disordered; sequence DTTTSRIYPKEASRHPLGLE. Phosphoserine is present on S148. The tract at residues 174–196 is required for interaction with PTPN13; the sequence is LEEDEDDGWNITYLPSAVDQTHS. The interval 226–250 is disordered; sequence PPWTLSDTDSRISPASPAGSPNADF. Phosphoserine is present on residues S241 and S245. 2 coiled-coil regions span residues 262 to 289 and 315 to 370; these read LRTL…VQSF and FHDL…LRSG.

This sequence belongs to the ENTR1 family. Found in a complex with ENTR1, PTPN13 and GIT1. Interacts with PTPN13 (via the FERM domain). Interacts (via N-terminus) with GIT1 (via N- and C-terminus); this interaction is direct. Interacts with NOD2. Interacts (via N-terminus) with IFT88. Interacts with VPS35. Post-translationally, phosphorylated.

It localises to the cytoplasm. The protein localises to the early endosome. The protein resides in the endosome. Its subcellular location is the recycling endosome. It is found in the midbody. It localises to the cytoskeleton. The protein localises to the microtubule organizing center. The protein resides in the centrosome. Its subcellular location is the cilium basal body. Functionally, may be involved in modulation of TNF response. May be involved in presentation of TNFRSF1A on the cell surface. Involved in the endosome-to-plasma membrane trafficking and recycling of SNX27-retromer-dependent cargo proteins, such as GLUT1. Involved in the regulation of cytokinesis; the function may involve PTPN13 and GIT1. In terms of biological role, endosome-associated protein that plays a role in membrane receptor sorting, cytokinesis and ciliogenesis. Involved in the endosome-to-plasma membrane trafficking and recycling of SNX27-retromer-dependent cargo proteins, such as GLUT1. Involved in the regulation of cytokinesis; the function may involve PTPN13 and GIT1. Plays a role in the formation of cilia. Involved in cargo protein localization, such as PKD2, at primary cilia. Involved in the presentation of the tumor necrosis factor (TNF) receptor TNFRSF1A on the cell surface, and hence in the modulation of the TNF-induced apoptosis. The chain is Endosome-associated-trafficking regulator 1 from Mus musculus (Mouse).